Here is a 163-residue protein sequence, read N- to C-terminus: Acetolactate synthase isozyme 3 small subunit (163 aa).

The region spanning 4–78 (ILSVLLENES…DVLRVSELGQ (75 aa)) is the ACT domain.

Belongs to the acetolactate synthase small subunit family. In terms of assembly, dimer of large and small chains.

The enzyme catalyses 2 pyruvate + H(+) = (2S)-2-acetolactate + CO2. It functions in the pathway amino-acid biosynthesis; L-isoleucine biosynthesis; L-isoleucine from 2-oxobutanoate: step 1/4. It participates in amino-acid biosynthesis; L-valine biosynthesis; L-valine from pyruvate: step 1/4. Sensitive to valine inhibition. The polypeptide is Acetolactate synthase isozyme 3 small subunit (ilvH) (Escherichia coli (strain K12)).